Here is an 850-residue protein sequence, read N- to C-terminus: Pro-neuregulin-2, membrane-bound isoform (850 aa).

The segment at 1–96 (MRQVCCSALP…AAAAGGMRRD (96 aa)) is disordered. The propeptide occupies 1-111 (MRQVCCSALP…SMLLFGVSLA (111 aa)). Low complexity predominate over residues 20–59 (SSYSDSSSSSSERSSSSSSSSSESGSSSRSSSNNSSISRP). N52 and N53 each carry an N-linked (GlcNAc...) asparagine glycan. Positions 60-74 (AAPPEPRPQQQPQPR) are enriched in pro residues. The span at 75–92 (SPAARRAAARSRAAAAGG) shows a compositional bias: low complexity. The Extracellular portion of the chain corresponds to 112–405 (CYSPSLKSVQ…QKAEELYQKR (294 aa)). N147, N278, and N346 each carry an N-linked (GlcNAc...) asparagine glycan. The Ig-like C2-type domain occupies 237–332 (PKLKKMKSQT…RGRLYVNSVS (96 aa)). Cystine bridges form between C257–C311, C345–C359, C353–C370, and C372–C381. The EGF-like domain occupies 341–382 (HARKCNETAKSYCVNGGVCYYIEGINQLSCKCPNGFFGQRCL). A helical transmembrane segment spans residues 406 to 426 (VLTITGICVALLVVGIVCVVA). Topologically, residues 427–850 (YCKTKKQRKQ…PRAKQDSAPL (424 aa)) are cytoplasmic. Disordered regions lie at residues 492-535 (TFSG…DSQS), 566-585 (EERR…SLRD), 647-681 (LLRH…YYPA), 700-788 (LPAS…DGAL), and 801-850 (AHDA…SAPL). Positions 494 to 506 (SGSHSCSPSHHCS) are enriched in low complexity. Basic and acidic residues predominate over residues 514-527 (HRHESHTWSLERSE). Positions 651–665 (PAPPGPGPGPGPGPG) are enriched in pro residues. The span at 750-767 (GLAAQRARAARDSLSLSS) shows a compositional bias: low complexity.

The protein belongs to the neuregulin family. Interacts with ERBB3 and ERBB4. Post-translationally, proteolytic cleavage close to the plasma membrane on the external face leads to the release of the soluble growth factor form. In terms of processing, extensive glycosylation precedes the proteolytic cleavage. Restricted to the cerebellum in the adult.

The protein localises to the cell membrane. It localises to the secreted. Direct ligand for ERBB3 and ERBB4 tyrosine kinase receptors. Concomitantly recruits ERBB1 and ERBB2 coreceptors, resulting in ligand-stimulated tyrosine phosphorylation and activation of the ERBB receptors. May also promote the heterodimerization with the EGF receptor. The polypeptide is Pro-neuregulin-2, membrane-bound isoform (NRG2) (Homo sapiens (Human)).